The sequence spans 98 residues: ATP synthase subunit alpha, chloroplastic (98 aa).

This sequence belongs to the ATPase alpha/beta chains family. As to quaternary structure, F-type ATPases have 2 components, CF(1) - the catalytic core - and CF(0) - the membrane proton channel. CF(1) has five subunits: alpha(3), beta(3), gamma(1), delta(1), epsilon(1). CF(0) has four main subunits: a, b, b' and c.

It is found in the plastid. It localises to the chloroplast thylakoid membrane. The catalysed reaction is ATP + H2O + 4 H(+)(in) = ADP + phosphate + 5 H(+)(out). Its function is as follows. Produces ATP from ADP in the presence of a proton gradient across the membrane. The alpha chain is a regulatory subunit. The protein is ATP synthase subunit alpha, chloroplastic (atpA) of Populus euphratica (Euphrates poplar).